A 298-amino-acid polypeptide reads, in one-letter code: Ethanolamine ammonia-lyase small subunit (298 aa).

The tract at residues A15–T43 is disordered. V210, E231, and C261 together coordinate adenosylcob(III)alamin.

This sequence belongs to the EutC family. As to quaternary structure, the basic unit is a heterodimer which dimerizes to form tetramers. The heterotetramers trimerize; 6 large subunits form a core ring with 6 small subunits projecting outwards. The cofactor is adenosylcob(III)alamin.

Its subcellular location is the bacterial microcompartment. The catalysed reaction is ethanolamine = acetaldehyde + NH4(+). It participates in amine and polyamine degradation; ethanolamine degradation. In terms of biological role, catalyzes the deamination of various vicinal amino-alcohols to oxo compounds. Allows this organism to utilize ethanolamine as the sole source of nitrogen and carbon in the presence of external vitamin B12. In Salmonella arizonae (strain ATCC BAA-731 / CDC346-86 / RSK2980), this protein is Ethanolamine ammonia-lyase small subunit.